The following is a 512-amino-acid chain: Lysine--tRNA ligase (512 aa).

The Mg(2+) site is built by Glu422 and Glu429.

This sequence belongs to the class-II aminoacyl-tRNA synthetase family. Homodimer. Requires Mg(2+) as cofactor.

Its subcellular location is the cytoplasm. The catalysed reaction is tRNA(Lys) + L-lysine + ATP = L-lysyl-tRNA(Lys) + AMP + diphosphate. The polypeptide is Lysine--tRNA ligase (Paraburkholderia phymatum (strain DSM 17167 / CIP 108236 / LMG 21445 / STM815) (Burkholderia phymatum)).